A 360-amino-acid chain; its full sequence is Alpha-N-acetyl-neuraminyl-2,3-beta-galactosyl-1,3-N-acetyl-galactosaminide alpha-2,6-sialyltransferase (360 aa).

Residues 1–71 (MEHVVTCWRL…PGRLLLLTLC (71 aa)) are Cytoplasmic-facing. A helical; Signal-anchor for type II membrane protein transmembrane segment spans residues 72 to 94 (ILTFSAVCVFLCCWACLPLCLAT). Over 95–360 (CLDRHLPAAP…VFAHPSWRAK (266 aa)) the chain is Lumenal. Cysteine 134 and cysteine 283 are oxidised to a cystine. N-linked (GlcNAc...) asparagine glycosylation occurs at asparagine 193.

It belongs to the glycosyltransferase 29 family. As to expression, high expression in brain and colon and to a lesser extent in lung, heart, kidney, spleen and thymus.

It localises to the golgi apparatus membrane. The enzyme catalyses an alpha-Neu5Ac-(2-&gt;3)-beta-D-Gal-(1-&gt;3)-D-GlcNAc derivative + CMP-N-acetyl-beta-neuraminate = an alpha-Neu5Ac-(2-&gt;3)-beta-D-Gal-(1-&gt;3)-[alpha-Neu5Ac-(2-&gt;6)]-D-GlcNAc derivative + CMP + H(+). It catalyses the reaction N-acetyl-alpha-neuraminosyl-(2-&gt;3)-beta-D-galactosyl-(1-&gt;3)-N-acetyl-D-galactosamine + CMP-N-acetyl-beta-neuraminate = N-acetyl-alpha-neuraminosyl-(2-&gt;3)-beta-D-galactosyl-(1-&gt;3)-[N-acetyl-alpha-neuraminosyl-(2-&gt;6)]-N-acetyl-D-galactosamine + CMP + H(+). The catalysed reaction is a ganglioside GM1b (d18:1(4E)) + CMP-N-acetyl-beta-neuraminate = a ganglioside GD1alpha (d18:1(4E)) + CMP + H(+). It carries out the reaction 3-O-[alpha-Neu5Ac-(2-&gt;3)-beta-D-Gal-(1-&gt;3)-alpha-D-GalNAc]-L-Ser-[protein] + CMP-N-acetyl-beta-neuraminate = a 3-O-{alpha-Neu5Ac-(2-&gt;3)-beta-D-Gal-(1-&gt;3)-[alpha-Neu5Ac-(2-&gt;6)]-alpha-D-GalNAc}-L-seryl-[protein] + CMP + H(+). The enzyme catalyses 3-O-[alpha-Neu5Ac-(2-&gt;3)-beta-D-Gal-(1-&gt;3)-alpha-D-GalNAc]-L-Thr-[protein] + CMP-N-acetyl-beta-neuraminate = a 3-O-{alpha-Neu5Ac-(2-&gt;3)-beta-D-Gal-(1-&gt;3)-[alpha-Neu5Ac-(2-&gt;6)]-alpha-D-GalNAc}-L-threonyl-[protein] + CMP + H(+). The protein operates within protein modification; protein glycosylation. It participates in glycolipid biosynthesis. Functionally, transfers the sialyl group (N-acetyl-alpha-neuraminyl or NeuAc) from CMP-NeuAc to the GalNAc residue on the NeuAc-alpha-2,3-Gal-beta-1,3-GalNAc sequence of glycoproteins and glycolipids forming an alpha-2,6-linkage. Produces branched type disialyl structures by transfer of a sialyl group onto a GalNAc residue inside the backbone core chains. Prefers O-glycans to glycoproteins or glycolipids. The protein is Alpha-N-acetyl-neuraminyl-2,3-beta-galactosyl-1,3-N-acetyl-galactosaminide alpha-2,6-sialyltransferase (St6galnac4) of Mus musculus (Mouse).